Reading from the N-terminus, the 396-residue chain is Tryptophan synthase beta chain (396 aa).

N6-(pyridoxal phosphate)lysine is present on lysine 88.

It belongs to the TrpB family. As to quaternary structure, tetramer of two alpha and two beta chains. Pyridoxal 5'-phosphate is required as a cofactor.

The enzyme catalyses (1S,2R)-1-C-(indol-3-yl)glycerol 3-phosphate + L-serine = D-glyceraldehyde 3-phosphate + L-tryptophan + H2O. It functions in the pathway amino-acid biosynthesis; L-tryptophan biosynthesis; L-tryptophan from chorismate: step 5/5. The beta subunit is responsible for the synthesis of L-tryptophan from indole and L-serine. This Shewanella baltica (strain OS195) protein is Tryptophan synthase beta chain.